Here is a 282-residue protein sequence, read N- to C-terminus: tRNA pseudouridine synthase B (282 aa).

The Nucleophile role is filled by aspartate 39.

The protein belongs to the pseudouridine synthase TruB family. Type 1 subfamily.

The enzyme catalyses uridine(55) in tRNA = pseudouridine(55) in tRNA. Functionally, responsible for synthesis of pseudouridine from uracil-55 in the psi GC loop of transfer RNAs. This is tRNA pseudouridine synthase B from Borrelia garinii subsp. bavariensis (strain ATCC BAA-2496 / DSM 23469 / PBi) (Borreliella bavariensis).